Consider the following 797-residue polypeptide: N-acetylneuraminate (7)9-O-acetyltransferase (797 aa).

The Cytoplasmic portion of the chain corresponds to 1-18 (MAALAYNLGKREINHYFS). Residues 19–39 (VRSAKVLALVAVLLLAACHLA) traverse the membrane as a helical segment. Residues 40-313 (SRRYRGNDSC…QPRPPLTLIQ (274 aa)) are Lumenal-facing. Asn46 carries an N-linked (GlcNAc...) asparagine glycan. The Acyl-ester intermediate role is filled by Ser94. Asn175 and Asn187 each carry an N-linked (GlcNAc...) asparagine glycan. Catalysis depends on residues Asp270 and His273. Residues 314 to 334 (KLAACFFTLSIIGYFIFYVIH) traverse the membrane as a helical segment. The Cytoplasmic segment spans residues 335 to 363 (RNAHRKNKPCTDLESGEEKKNIINTPVSS). A helical transmembrane segment spans residues 364–384 (LEILLQSFCKLGLIMAYFYMC). Residues 385–395 (DRANLFMKENK) are Lumenal-facing. Residues 396 to 416 (FYTHSSFFIPIIYILVLGVFY) traverse the membrane as a helical segment. Over 417–439 (NENTKETKVLNREQTDEWKGWMQ) the chain is Cytoplasmic. Residues 440–460 (LVILIYHISGASTFLPVYMHI) form a helical membrane-spanning segment. Arg461 is a topological domain (lumenal). The chain crosses the membrane as a helical span at residues 462 to 482 (VLVAAYLFQTGYGHFSYFWIK). The Cytoplasmic portion of the chain corresponds to 483–486 (GDFG). A helical transmembrane segment spans residues 487–507 (IHRVCQVLFRLNFLVVVLCIV). Residues 508 to 513 (MDRPYQ) are Lumenal-facing. Residues 514-534 (FYYFVPLVTVWFMVIYVTLAL) form a helical membrane-spanning segment. The Cytoplasmic segment spans residues 535 to 546 (WPQITQKKANGN). Residues 547–567 (FFWYLGLLLKLGLLLLCIWFL) form a helical membrane-spanning segment. Topologically, residues 568–599 (AYSQGAFEKIFSLWPLSKCFELEGSVYEWWFR) are lumenal. A helical transmembrane segment spans residues 600–620 (WRLDRYVVFHGVLFAFIYLAL). Residues 621-638 (QRRQILSEGKGEPLFSNK) lie on the Cytoplasmic side of the membrane. A helical membrane pass occupies residues 639 to 659 (ISNFLLFVSVVSFLTYSIWAS). Residues 660–671 (SCKNKAECNELH) lie on the Lumenal side of the membrane. The chain crosses the membrane as a helical span at residues 672 to 692 (PSVSVVQIVAFILIRNIPGYA). Residues 693–698 (RSIYSS) lie on the Cytoplasmic side of the membrane. The chain crosses the membrane as a helical span at residues 699–719 (FFAWFGKISLELFICQYHIWL). The Lumenal portion of the chain corresponds to 720-725 (AADTRG). A helical transmembrane segment spans residues 726 to 746 (ILVLIPGNPTLNIIVSTFIFV). The Cytoplasmic portion of the chain corresponds to 747–770 (CVAHEISQITTDLAQVVIPKDNPS). A helical membrane pass occupies residues 771–791 (LFRRLACTIAFFGGVLILSSI). Residues 792–797 (QDKSRL) are Lumenal-facing.

The protein belongs to the PC-esterase family. CASD1 subfamily. N-glycosylated. Ubiquitously expressed.

The protein resides in the golgi apparatus membrane. The enzyme catalyses CMP-N-acetyl-beta-neuraminate + acetyl-CoA = CMP-N-acetyl-9-O-acetyl-beta-neuraminate + CoA. It catalyses the reaction a ganglioside GD3 (d18:1(4E)) + acetyl-CoA = a ganglioside Ac-O-7-GD3(d18:1(4E)) + CoA. The catalysed reaction is CMP-N-acetyl-beta-neuraminate + acetyl-CoA = CMP-N-acetyl-7-O-acetyl-beta-neuraminate + CoA. In terms of biological role, key enzyme in the biosynthesis of O-acetylated (O-Ac) sialoglycans such as gangliosides O-AcGD3 and O-AcGD2, which affect various processes such as cell-cell interactions, host-pathogen recognition. Catalyzes the transfer of an acetyl group from a donor, the acetyl-coenzyme-A molecule (acetyl-CoA), to the C7/8/9 OH-position of a sialic acid residue. The primary site of O-acetyl group transfer on sialic acid seems to depend on cell type and can be C7, from which the O-acetyl group could subsequently migrate to the C8 and then to the C9 position, or at C9 with possibility of migrating to the C8 and then to the C7 position. Together with ST8SIA1 (GD3 synthase) it increases the levels of ganglioside Ac-O-7-GD3. Can transfer the acetyl group from acetyl-CoA to free sialate (N-acetylneuraminate, Neu5Ac) in vitro, but has preferred substrate specificity for CMP-activated sialate (CMP-Neu5Ac), resulting in the formation of 9-O-acetylated CMP-Neu5Ac (CMP-Neu5,9Ac2). CMP-Neu5,9Ac2 may be used by sialyltransferases as a sialate donor for glycoconjugate acceptors such as ganglioside GD3. O-acetylation at position C9 of ganglioside GD3 can counteract the pro-apoptotic effects of the ganglioside GD3 in tumor cells. The chain is N-acetylneuraminate (7)9-O-acetyltransferase from Mus musculus (Mouse).